Reading from the N-terminus, the 187-residue chain is Small ribosomal subunit protein uS4 (187 aa).

The S4 RNA-binding domain maps to 105 to 174; it reads RRLQTLVFRK…DNHPERAKIV (70 aa).

The protein belongs to the universal ribosomal protein uS4 family. As to quaternary structure, part of the 30S ribosomal subunit. Contacts protein S5. The interaction surface between S4 and S5 is involved in control of translational fidelity.

One of the primary rRNA binding proteins, it binds directly to 16S rRNA where it nucleates assembly of the body of the 30S subunit. Its function is as follows. With S5 and S12 plays an important role in translational accuracy. The polypeptide is Small ribosomal subunit protein uS4 (Methanocaldococcus jannaschii (strain ATCC 43067 / DSM 2661 / JAL-1 / JCM 10045 / NBRC 100440) (Methanococcus jannaschii)).